The sequence spans 428 residues: UDP-N-acetylglucosamine 1-carboxyvinyltransferase 2 (428 aa).

22 to 23 (KN) provides a ligand contact to phosphoenolpyruvate. Arg-92 is a binding site for UDP-N-acetyl-alpha-D-glucosamine. Cys-116 functions as the Proton donor in the catalytic mechanism. Cys-116 bears the 2-(S-cysteinyl)pyruvic acid O-phosphothioketal mark. UDP-N-acetyl-alpha-D-glucosamine contacts are provided by residues 121–125 (RPIDQ), Asp-304, and Ile-326.

The protein belongs to the EPSP synthase family. MurA subfamily.

It localises to the cytoplasm. The catalysed reaction is phosphoenolpyruvate + UDP-N-acetyl-alpha-D-glucosamine = UDP-N-acetyl-3-O-(1-carboxyvinyl)-alpha-D-glucosamine + phosphate. It functions in the pathway cell wall biogenesis; peptidoglycan biosynthesis. Functionally, cell wall formation. Adds enolpyruvyl to UDP-N-acetylglucosamine. The protein is UDP-N-acetylglucosamine 1-carboxyvinyltransferase 2 of Geobacillus kaustophilus (strain HTA426).